Consider the following 350-residue polypeptide: Streptomycin biosynthesis operon possible regulatory protein (350 aa).

A compositionally biased stretch (polar residues) spans 1-10 (MEHISGNSPE). 3 disordered regions span residues 1-20 (MEHI…AAVT), 168-189 (AGVP…LDPT), and 211-258 (AAQA…SRAD). Composition is skewed to basic and acidic residues over residues 177 to 189 (IGRD…LDPT) and 223 to 242 (DVRK…DRQQ).

This Streptomyces griseus protein is Streptomycin biosynthesis operon possible regulatory protein (strR).